The following is a 391-amino-acid chain: Protein kinase ORF14 (391 aa).

The region spanning 109-391 (VPLRHTRGNI…ETLVDEFSKI (283 aa)) is the Protein kinase domain. K134 is a binding site for ATP. The active-site Proton acceptor is the D235.

It belongs to the protein kinase superfamily. Ser/Thr protein kinase family.

It catalyses the reaction L-seryl-[protein] + ATP = O-phospho-L-seryl-[protein] + ADP + H(+). The enzyme catalyses L-threonyl-[protein] + ATP = O-phospho-L-threonyl-[protein] + ADP + H(+). This is Protein kinase ORF14 (ORF14) from Ictalurid herpesvirus 1 (strain Auburn) (IcHV-1).